Consider the following 176-residue polypeptide: Secreted LysM effector ELP2 (176 aa).

A signal peptide spans 1-18; the sequence is MQFSIFTVLAAAASFAVA. Positions 31-45 are enriched in low complexity; sequence TSAAANPSPTTSGAA. Positions 31 to 50 are disordered; the sequence is TSAAANPSPTTSGAANPSPT. In terms of domain architecture, LysM 1 spans 58–102; sequence HKTTVKAGQTLTTIAERFHSGICDIAWQNKLENPNVIFVGQVLLV. Asparagine 111 is a glycosylation site (N-linked (GlcNAc...) asparagine). Residues 129–173 enclose the LysM 2 domain; that stretch reads ATYTIKSGDTFFAVAQSLGITTDSLTGANPGVVPENLQIDQVINV.

It belongs to the secreted LysM effector family. Forms homodimers in a chitin-independent manner through interactions at the N-termini of EPL2 monomers. Homodimers are further polymerized in a chitin-dependent manner.

Its subcellular location is the secreted. Functionally, secreted effector that enables the plant pathogenic fungus to manipulate host defenses for successful infection. Binds chitin oligomers and polymer with high affinity and plays a dual role, not only in the suppression of chitin-triggered immune responses, but also in appressorium function. Does not protect fungal hyphae against plant chitinases but suppresses chitin-triggered plant immune responses. Chitin-induced polymerization of homodimers forms a contiguous ELP2 highly oligomeric super-complexe that may precipitate at infection sites to eliminate chitin oligomers, and thus suppress the activation of chitin-induced plant immunity. The polypeptide is Secreted LysM effector ELP2 (Colletotrichum higginsianum (strain IMI 349063) (Crucifer anthracnose fungus)).